The sequence spans 401 residues: Multidrug resistance protein MdtH (401 aa).

The next 11 membrane-spanning stretches (helical) occupy residues 13-33, 34-54, 88-108, 139-159, 164-184, 211-231, 248-268, 275-295, 298-318, 341-361, and 366-386; these read YFLIIDNMFVVIGFYAVFPLI, SIHFVEQLGWTAFLVGFALGL, IGFIIMSLAHTPTLLCAACIL, ILMLEDSICAIIGITLGSWLL, FQLVCLTGAILFFIAGMFNAW, FIIYTLTLSGYYILSAQVMLM, YIYITEAILSLLLIIPITYWM, ETRLMLGLVIMIISLSPIGSV, LYELLILISLFYIGSIVAEPA, LSLALGGTLGYSGGGWLYDLG, and FYQLPWIALSIIGTITVLILY.

Belongs to the major facilitator superfamily. DHA1 family. MdtH (TC 2.A.1.2.21) subfamily.

It is found in the cell inner membrane. In Blochmanniella floridana, this protein is Multidrug resistance protein MdtH.